The following is a 396-amino-acid chain: Ornithine aminotransferase (396 aa).

Lysine 255 is subject to N6-(pyridoxal phosphate)lysine.

The protein belongs to the class-III pyridoxal-phosphate-dependent aminotransferase family. OAT subfamily. It depends on pyridoxal 5'-phosphate as a cofactor.

It is found in the cytoplasm. It catalyses the reaction a 2-oxocarboxylate + L-ornithine = L-glutamate 5-semialdehyde + an L-alpha-amino acid. The protein operates within amino-acid biosynthesis; L-proline biosynthesis; L-glutamate 5-semialdehyde from L-ornithine: step 1/1. In terms of biological role, catalyzes the interconversion of ornithine to glutamate semialdehyde. In Staphylococcus carnosus (strain TM300), this protein is Ornithine aminotransferase.